The chain runs to 441 residues: Capsid vertex component 1 (441 aa).

It belongs to the herpesviridae CVC1 protein family. Interacts (via C-terminus) with capsid vertex component 2/CVC2.

It is found in the virion. Its subcellular location is the host nucleus. In terms of biological role, capsid vertex-specific component that plays a role during viral DNA encapsidation, assuring correct genome cleavage and presumably stabilizing capsids that contain full-length viral genomes. The sequence is that of Capsid vertex component 1 from Saimiriine herpesvirus 2 (strain 11) (SaHV-2).